Here is a 158-residue protein sequence, read N- to C-terminus: MRLLLWVLLVTLVTFLSSGDAAPVDSNKQLERAAINKVTSRNLANDNSLKHEKRFLRGDRSNIVNLKDGDENEERKIGQKMTTALKSIKVWYLKWEQKILLPGFKKMAKKEMTYSKLMDRFRVRMMNSGRWGTPSGFKRYGRLYKDYLISINRADLTV.

The N-terminal stretch at 1–21 is a signal peptide; that stretch reads MRLLLWVLLVTLVTFLSSGDA. Positions 54-75 match the RxLR-dEER motif; it reads RFLRGDRSNIVNLKDGDENEER.

This sequence belongs to the RxLR effector family.

It is found in the secreted. The protein localises to the host cell. Its function is as follows. Secreted effector that completely suppresses elicitor-induced cell death in host and enhances virulence of P.parasitica. In Phytophthora nicotianae (Potato buckeye rot agent), this protein is Secreted RxLR effector protein 2.